A 228-amino-acid chain; its full sequence is Abnormal cell migration protein 18 (228 aa).

The signal sequence occupies residues 1 to 19 (MTFTLRLLVLCTVYSYVIS). N-linked (GlcNAc...) asparagine glycans are attached at residues N135 and N159.

In terms of tissue distribution, expressed in body wall muscle.

The protein localises to the secreted. The protein resides in the extracellular space. Its subcellular location is the extracellular matrix. It localises to the basement membrane. Required for the directional control of distal tip cell migration during gonadogenesis, probably by recruiting fibulin fbl-1 to the gonad basement membrane. The sequence is that of Abnormal cell migration protein 18 from Caenorhabditis elegans.